We begin with the raw amino-acid sequence, 88 residues long: Apolipoprotein C-I (88 aa).

The signal sequence occupies residues 1 to 26 (MRLFIALPVLIVVVAMALEGPAPAQA).

It belongs to the apolipoprotein C1 family.

The protein localises to the secreted. In terms of biological role, inhibitor of lipoprotein binding to the low density lipoprotein (LDL) receptor, LDL receptor-related protein, and very low density lipoprotein (VLDL) receptor. Associates with high density lipoproteins (HDL) and the triacylglycerol-rich lipoproteins in the plasma and makes up about 10% of the protein of the VLDL and 2% of that of HDL. Appears to interfere directly with fatty acid uptake and is also the major plasma inhibitor of cholesteryl ester transfer protein (CETP). Binds free fatty acids and reduces their intracellular esterification. Modulates the interaction of APOE with beta-migrating VLDL and inhibits binding of beta-VLDL to the LDL receptor-related protein. This chain is Apolipoprotein C-I (Apoc1), found in Rattus norvegicus (Rat).